The sequence spans 210 residues: Small ribosomal subunit protein uS4 (210 aa).

Residues 99-170 enclose the S4 RNA-binding domain; the sequence is RRLDNAVFRA…NLEAVVRRGV (72 aa).

It belongs to the universal ribosomal protein uS4 family. As to quaternary structure, part of the 30S ribosomal subunit. Contacts protein S5. The interaction surface between S4 and S5 is involved in control of translational fidelity.

Its function is as follows. One of the primary rRNA binding proteins, it binds directly to 16S rRNA where it nucleates assembly of the body of the 30S subunit. With S5 and S12 plays an important role in translational accuracy. This Desulfotalea psychrophila (strain LSv54 / DSM 12343) protein is Small ribosomal subunit protein uS4.